A 483-amino-acid chain; its full sequence is ATP synthase subunit beta (483 aa).

168-175 provides a ligand contact to ATP; that stretch reads GGAGVGKT.

This sequence belongs to the ATPase alpha/beta chains family. F-type ATPases have 2 components, CF(1) - the catalytic core - and CF(0) - the membrane proton channel. CF(1) has five subunits: alpha(3), beta(3), gamma(1), delta(1), epsilon(1). CF(0) has three main subunits: a(1), b(2) and c(9-12). The alpha and beta chains form an alternating ring which encloses part of the gamma chain. CF(1) is attached to CF(0) by a central stalk formed by the gamma and epsilon chains, while a peripheral stalk is formed by the delta and b chains.

Its subcellular location is the cell membrane. It catalyses the reaction ATP + H2O + 4 H(+)(in) = ADP + phosphate + 5 H(+)(out). Produces ATP from ADP in the presence of a proton gradient across the membrane. The catalytic sites are hosted primarily by the beta subunits. The polypeptide is ATP synthase subunit beta (Mycobacterium ulcerans (strain Agy99)).